The sequence spans 362 residues: NAD(P)H-quinone oxidoreductase subunit 1, chloroplastic (362 aa).

The next 8 helical transmembrane spans lie at 29–49, 103–123, 128–148, 164–184, 202–222, 247–267, 303–323, and 342–362; these read ILPI…IVWL, IAVI…HFVL, IGVF…LMAG, AAQS…ISLL, FFGW…ISSL, YSGI…LVSS, TMGI…SITI, and FLLP…LVSL.

It belongs to the complex I subunit 1 family. As to quaternary structure, NDH is composed of at least 16 different subunits, 5 of which are encoded in the nucleus.

It is found in the plastid. The protein localises to the chloroplast thylakoid membrane. The enzyme catalyses a plastoquinone + NADH + (n+1) H(+)(in) = a plastoquinol + NAD(+) + n H(+)(out). The catalysed reaction is a plastoquinone + NADPH + (n+1) H(+)(in) = a plastoquinol + NADP(+) + n H(+)(out). In terms of biological role, NDH shuttles electrons from NAD(P)H:plastoquinone, via FMN and iron-sulfur (Fe-S) centers, to quinones in the photosynthetic chain and possibly in a chloroplast respiratory chain. The immediate electron acceptor for the enzyme in this species is believed to be plastoquinone. Couples the redox reaction to proton translocation, and thus conserves the redox energy in a proton gradient. This is NAD(P)H-quinone oxidoreductase subunit 1, chloroplastic from Hordeum vulgare (Barley).